The sequence spans 511 residues: V-type proton ATPase subunit B, brain isoform (511 aa).

R400 contributes to the ATP binding site.

The protein belongs to the ATPase alpha/beta chains family. V-ATPase is a heteromultimeric enzyme made up of two complexes: the ATP-hydrolytic V1 complex and the proton translocation V0 complex. The V1 complex consists of three catalytic AB heterodimers that form a heterohexamer, three peripheral stalks each consisting of EG heterodimers, one central rotor including subunits D and F, and the regulatory subunits C and H. The proton translocation complex V0 consists of the proton transport subunit a, a ring of proteolipid subunits c9c'', rotary subunit d, subunits e and f, and the accessory subunits ATP6AP1/Ac45 and ATP6AP2/PRR.

The protein localises to the apical cell membrane. Its subcellular location is the melanosome. The protein resides in the cytoplasm. It localises to the cytoplasmic vesicle. It is found in the secretory vesicle. The protein localises to the synaptic vesicle membrane. Its subcellular location is the clathrin-coated vesicle membrane. Functionally, non-catalytic subunit of the V1 complex of vacuolar(H+)-ATPase (V-ATPase), a multisubunit enzyme composed of a peripheral complex (V1) that hydrolyzes ATP and a membrane integral complex (V0) that translocates protons. V-ATPase is responsible for acidifying and maintaining the pH of intracellular compartments and in some cell types, is targeted to the plasma membrane, where it is responsible for acidifying the extracellular environment. In renal intercalated cells, can partially compensate the lack of ATP6V1B1 and mediate secretion of protons (H+) into the urine under base-line conditions but not in conditions of acid load. The polypeptide is V-type proton ATPase subunit B, brain isoform (ATP6V1B2) (Pongo abelii (Sumatran orangutan)).